A 443-amino-acid polypeptide reads, in one-letter code: Putative transporter AmpG 1 (443 aa).

The next 12 helical transmembrane spans lie at 6–26 (HVCI…MITG), 43–63 (IGIL…APVF), 74–96 (ILGH…TSIL), 106–128 (VLLS…ILSA), 144–164 (GIYI…AIYL), 172–192 (KIYQ…ILVS), 255–275 (DISL…YRLP), 300–320 (VCKF…GIIM), 326–346 (LYSI…FILL), 355–375 (ILFI…TAYI), 394–414 (LSSM…YMVV), and 416–436 (FGWQ…LLIL).

The protein belongs to the major facilitator superfamily.

It is found in the cell inner membrane. The polypeptide is Putative transporter AmpG 1 (ampG1) (Rickettsia typhi (strain ATCC VR-144 / Wilmington)).